We begin with the raw amino-acid sequence, 417 residues long: NADH-quinone oxidoreductase subunit D (417 aa).

It belongs to the complex I 49 kDa subunit family. NDH-1 is composed of 14 different subunits. Subunits NuoB, C, D, E, F, and G constitute the peripheral sector of the complex.

It is found in the cell inner membrane. The enzyme catalyses a quinone + NADH + 5 H(+)(in) = a quinol + NAD(+) + 4 H(+)(out). NDH-1 shuttles electrons from NADH, via FMN and iron-sulfur (Fe-S) centers, to quinones in the respiratory chain. The immediate electron acceptor for the enzyme in this species is believed to be ubiquinone. Couples the redox reaction to proton translocation (for every two electrons transferred, four hydrogen ions are translocated across the cytoplasmic membrane), and thus conserves the redox energy in a proton gradient. This is NADH-quinone oxidoreductase subunit D from Burkholderia ambifaria (strain ATCC BAA-244 / DSM 16087 / CCUG 44356 / LMG 19182 / AMMD) (Burkholderia cepacia (strain AMMD)).